The following is a 173-amino-acid chain: Crossover junction endodeoxyribonuclease RuvC (173 aa).

Active-site residues include Asp8, Glu67, and Asp139. Residues Asp8, Glu67, and Asp139 each contribute to the Mg(2+) site.

It belongs to the RuvC family. Homodimer which binds Holliday junction (HJ) DNA. The HJ becomes 2-fold symmetrical on binding to RuvC with unstacked arms; it has a different conformation from HJ DNA in complex with RuvA. In the full resolvosome a probable DNA-RuvA(4)-RuvB(12)-RuvC(2) complex forms which resolves the HJ. Requires Mg(2+) as cofactor.

The protein resides in the cytoplasm. It carries out the reaction Endonucleolytic cleavage at a junction such as a reciprocal single-stranded crossover between two homologous DNA duplexes (Holliday junction).. Its function is as follows. The RuvA-RuvB-RuvC complex processes Holliday junction (HJ) DNA during genetic recombination and DNA repair. Endonuclease that resolves HJ intermediates. Cleaves cruciform DNA by making single-stranded nicks across the HJ at symmetrical positions within the homologous arms, yielding a 5'-phosphate and a 3'-hydroxyl group; requires a central core of homology in the junction. The consensus cleavage sequence is 5'-(A/T)TT(C/G)-3'. Cleavage occurs on the 3'-side of the TT dinucleotide at the point of strand exchange. HJ branch migration catalyzed by RuvA-RuvB allows RuvC to scan DNA until it finds its consensus sequence, where it cleaves and resolves the cruciform DNA. The chain is Crossover junction endodeoxyribonuclease RuvC from Klebsiella pneumoniae (strain 342).